Here is a 762-residue protein sequence, read N- to C-terminus: 5-methyltetrahydropteroyltriglutamate--homocysteine methyltransferase (762 aa).

5-methyltetrahydropteroyltri-L-glutamate-binding positions include 18-21 (REWK) and Lys-112. Residues 435-437 (IGS) and Glu-488 contribute to the L-homocysteine site. L-methionine-binding positions include 435–437 (IGS) and Glu-488. 5-methyltetrahydropteroyltri-L-glutamate contacts are provided by residues 519 to 520 (RC) and Trp-565. L-homocysteine is bound at residue Asp-603. Asp-603 is a binding site for L-methionine. Glu-609 serves as a coordination point for 5-methyltetrahydropteroyltri-L-glutamate. Zn(2+) contacts are provided by His-645, Cys-647, and Glu-669. The Proton donor role is filled by His-698. Cys-719 carries the post-translational modification S-bacillithiol cysteine disulfide. Zn(2+) is bound at residue Cys-730.

The protein belongs to the vitamin-B12 independent methionine synthase family. Zn(2+) is required as a cofactor. In terms of processing, in response to oxidative stress, Cys-719 can react with bacillithiol (BSH) to form mixed disulfides. S-bacillithiolation leads to loss of catalytic activity and methionine auxotrophy.

It catalyses the reaction 5-methyltetrahydropteroyltri-L-glutamate + L-homocysteine = tetrahydropteroyltri-L-glutamate + L-methionine. The protein operates within amino-acid biosynthesis; L-methionine biosynthesis via de novo pathway; L-methionine from L-homocysteine (MetE route): step 1/1. In terms of biological role, catalyzes the transfer of a methyl group from 5-methyltetrahydrofolate to homocysteine resulting in methionine formation. This chain is 5-methyltetrahydropteroyltriglutamate--homocysteine methyltransferase, found in Bacillus subtilis (strain 168).